A 400-amino-acid chain; its full sequence is Melanization protease 1 (400 aa).

An N-terminal signal peptide occupies residues 1–22 (MEPHFFFTVLWMLLMGTSSTYA). Residues 23–137 (QEIFGYCRTP…PNCGENFGDR (115 aa)) constitute a propeptide, activation peptide. The Clip domain maps to 28 to 91 (YCRTPDENSG…FCFTNVQICC (64 aa)). Disulfide bonds link Cys29/Cys90, Cys39/Cys70, and Cys45/Cys91. The disordered stretch occupies residues 98–120 (NQQPQWGNHPQPTQTTKPTKRSG). Intrachain disulfides connect Cys130/Cys268, Cys168/Cys184, and Cys210/Cys220. The 262-residue stretch at 138–399 (VVGGNETTKR…YLNWIENNVR (262 aa)) folds into the Peptidase S1 domain. N-linked (GlcNAc...) asparagine glycosylation is present at Asn142. The active-site Charge relay system is the His183. Residues Glu201, Asp203, Thr206, and Asp209 each contribute to the Ca(2+) site. Asp248 serves as the catalytic Charge relay system. A glycan (N-linked (GlcNAc...) asparagine) is linked at Asn296. 2 disulfides stabilise this stretch: Cys315-Cys332 and Cys342-Cys375. Catalysis depends on Ser346, which acts as the Charge relay system.

Belongs to the peptidase S1 family. CLIP subfamily.

Functionally, serine protease which plays an essential role in the melanization immune response by acting downstream of sp7 to activate prophenoloxidase (PPO1). May function in diverse Hayan-dependent PPO1-activating cascades that are negatively controlled by different serpin proteins; Spn27A in the hemolymph and Spn77BA in the trachea. Regulation of melanization and PPO1 activation appears to be largely independent of the Toll signaling pathway. This is Melanization protease 1 from Drosophila melanogaster (Fruit fly).